The sequence spans 2513 residues: Polyprotein P1234 (2513 aa).

Positions 28 to 259 (EPKQVTPNDH…ESRKLLQSWH (232 aa)) constitute an Alphavirus-like MT domain. Residues 244–263 (GSTLYPESRKLLQSWHLPSV) are nsP1 membrane-binding. Residues cysteine 417 and cysteine 419 are each lipidated (S-palmitoyl cysteine; by host). The region spanning 690–842 (DLTSPPYHEF…HNICTQVYHK (153 aa)) is the (+)RNA virus helicase ATP-binding domain. 721-728 (GVPGSGKS) contributes to the a ribonucleoside 5'-triphosphate binding site. One can recognise a (+)RNA virus helicase C-terminal domain in the interval 843 to 991 (SISRRCTLPV…IKEWEAEHAS (149 aa)). The Peptidase C9 domain occupies 1004-1327 (DTFQNKANVC…NQLNAVYAGL (324 aa)). Residues 1005–1024 (TFQNKANVCWAKCLVPILDT) are nucleolus localization signal. Residue cysteine 1013 is the For cysteine protease nsP2 activity of the active site. The short motif at 1058-1067 (TRIYGVDLDS) is the Nuclear export signal element. Catalysis depends on histidine 1083, which acts as the For cysteine protease nsP2 activity. Residues 1182–1186 (PTKRV) carry the Nuclear localization signal motif. Residues aspartate 1343, asparagine 1357, glycine 1365, glycine 1445, valine 1446, and tyrosine 1447 each coordinate ADP-D-ribose. Zn(2+) contacts are provided by cysteine 1595, cysteine 1597, cysteine 1620, and cysteine 1638. Short sequence motifs (FGDF; binding to host G3BP1) lie at residues 1851–1854 (FGDF) and 1869–1872 (FGDF). In terms of domain architecture, RdRp catalytic spans 2267-2382 (DAVLETDIAS…HGVVSDALMA (116 aa)).

Interacts with non-structural protein 3. Interacts with RNA-directed RNA polymerase nsP4. Interacts with protease nsP2. interacts with itself. As to quaternary structure, interacts with mRNA-capping enzyme nsP1. Interacts with host DDX1. Interacts with host DDX3. Interacts (via C-terminus) with host G3BP1; this interaction inhibits the formation of host stress granules on viral mRNAs and the nsp3-G3BP1 complexes bind viral RNAs and probably orchestrate the assembly of viral replication complexes. Interacts (via C-terminus) with host G3BP2; this interaction inhibits the formation of host stress granules on viral mRNAs and the nsp3-G3BP2 complexes bind viral RNAs and probably orchestrate the assembly of viral replication complexes. In terms of assembly, interacts with mRNA-capping enzyme nsP1. Interacts with protease nsP2. interacts with itself. Interacts with RNA-directed RNA polymerase nsP4. Interacts with mRNA-capping enzyme nsP1. Interacts with KPNA1/karyopherin-alpha1; this interaction probably allows the active transport of protease nsP2 into the host nucleus. Mg(2+) is required as a cofactor. Mn(2+) serves as cofactor. In terms of processing, specific enzymatic cleavages in vivo yield mature proteins. The processing of the polyprotein is temporally regulated. In early stages (1.7 hpi), P1234 is first cleaved in trans through its nsP2 protease activity, releasing P123 and nsP4, which associate to form the early replication complex. At the same time, P1234 is also cut at the nsP1/nsP2 site early in infection but with lower efficiency. After replication of the viral minus-strand RNAs (4 hpi), the polyproteins are cut at the nsP1/nsP2 and nsP2/nsP3 sites very efficiently, preventing accumulation of P123 and P1234 and allowing the formation of the late replication complex. NsP3/nsP4 site is not cleaved anymore and P34 is produced rather than nsP4. Post-translationally, specific enzymatic cleavages in vivo yield mature proteins. The processing of the polyprotein is temporally regulated. In early stages (1.7 hpi), P123 is cleaved at the nsP1/nsP2 site with low efficiency. After replication of the viral minus-strand RNAs (4 hpi), the polyproteins are cut at the nsP1/nsP2 and nsP2/nsP3 sites very efficiently, preventing accumulation of P123 and allowing the formation of the late replication complex. Palmitoylated by host palmitoyltransferases ZDHHC2 and ZDHHC19. In terms of processing, phosphorylated by host on serines and threonines. Post-translationally, ubiquitinated; targets the protein for rapid degradation via the ubiquitin system. Nsp4 is present in extremely low quantities due to low frequency of translation through the amber stop-codon and the degradation by the ubiquitin pathway.

The protein resides in the host cytoplasmic vesicle membrane. It is found in the host cell membrane. The protein localises to the host cell projection. It localises to the host filopodium. Its subcellular location is the host nucleus. The protein resides in the host cytoplasm. It catalyses the reaction GTP + S-adenosyl-L-methionine = N(7)-methyl-GTP + S-adenosyl-L-homocysteine. The catalysed reaction is N(7)-methyl-GTP + L-histidyl-[protein] = N(tele)-(N(7)-methylguanosine 5'-phospho)-L-histidyl-[protein] + diphosphate. It carries out the reaction N(tele)-(N(7)-methylguanosine 5'-phospho)-L-histidyl-[protein] + a 5'-end diphospho-(purine-ribonucleoside) in mRNA + H(+) = a 5'-end (N(7)-methyl 5'-triphosphoguanosine)-(purine-ribonucleoside) in mRNA + L-histidyl-[protein]. The enzyme catalyses a 5'-end triphospho-ribonucleoside in mRNA + H2O = a 5'-end diphospho-ribonucleoside in mRNA + phosphate + H(+). It catalyses the reaction a ribonucleoside 5'-triphosphate + H2O = a ribonucleoside 5'-diphosphate + phosphate + H(+). The catalysed reaction is ATP + H2O = ADP + phosphate + H(+). It carries out the reaction RNA(n) + a ribonucleoside 5'-triphosphate = RNA(n+1) + diphosphate. The enzyme catalyses 4-O-(ADP-D-ribosyl)-L-aspartyl-[protein] + H2O = L-aspartyl-[protein] + ADP-D-ribose + H(+). It catalyses the reaction 5-O-(ADP-D-ribosyl)-L-glutamyl-[protein] + H2O = L-glutamyl-[protein] + ADP-D-ribose + H(+). The catalysed reaction is RNA(n) + ATP = RNA(n)-3'-adenine ribonucleotide + diphosphate. It carries out the reaction ADP-alpha-D-ribose 1''-phosphate + H2O = ADP-D-ribose + phosphate. Functionally, inactive precursor of the viral replicase, which is activated by cleavages carried out by the viral protease nsP2. Its function is as follows. The early replication complex formed by the polyprotein P123 and nsP4 synthesizes minus-strand RNAs. As soon P123 is cleaved into mature proteins, the plus-strand RNAs synthesis begins. Cytoplasmic capping enzyme that catalyzes two virus-specific reactions: methyltransferase and nsP1 guanylyltransferase. mRNA-capping is necessary since all viral RNAs are synthesized in the cytoplasm, and host capping enzymes are restricted to the nucleus. The enzymatic reaction involves a covalent link between 7-methyl-GMP and nsP1, whereas eukaryotic capping enzymes form a covalent complex only with GMP. nsP1 capping consists in the following reactions: GTP is first methylated into 7-methyl-GMP and then is covalently linked to nsP1 to form the m7GMp-nsP1 complex from which 7-methyl-GMP complex is transferred to the mRNA to create the cap structure. NsP1 is also needed for the initiation of the minus-strand RNAs synthesis. Probably serves as a membrane anchor for the replication complex composed of nsP1-nsP4. Palmitoylated nsP1 is remodeling host cell cytoskeleton, and induces filopodium-like structure formation at the surface of the host cell. In terms of biological role, multifunctional protein whose N-terminus is part of the RNA polymerase complex and displays NTPase, RNA triphosphatase and helicase activities. NTPase and RNA triphosphatase are involved in viral RNA capping and helicase keeps a check on the dsRNA replication intermediates. The C-terminus harbors a protease that specifically cleaves the polyproteins and releases the mature proteins. Required for the shutoff of minus-strand RNAs synthesis. Specifically inhibits the host IFN response by promoting the nuclear export of host STAT1. Also inhibits host transcription by inducing the rapid proteasome-dependent degradation of POLR2A, a catalytic subunit of the RNAPII complex. The resulting inhibition of cellular protein synthesis serves to ensure maximal viral gene expression and to evade host immune response. Functionally, seems to be essential for minus-strand RNAs and subgenomic 26S mRNAs synthesis. Displays mono-ADP-ribosylhydrolase activity. ADP-ribosylation is a post-translational modification that controls various processes of the host cell and the virus probably needs to revert it for optimal viral replication. Binds proteins of G3BP family and sequesters them into the viral RNA replication complexes thereby inhibiting the formation of host stress granules on viral mRNAs. The nsp3-G3BP complexes bind viral RNAs and probably orchestrate the assembly of viral replication complexes, thanks to the ability of G3BP family members to self-assemble and bind DNA. Its function is as follows. RNA dependent RNA polymerase. Replicates genomic and antigenomic RNA by recognizing replications specific signals. The early replication complex formed by the polyprotein P123 and nsP4 synthesizes minus-strand RNAs. The late replication complex composed of fully processed nsP1-nsP4 is responsible for the production of genomic and subgenomic plus-strand RNAs. In Anopheles (Human), this protein is Polyprotein P1234.